Here is a 94-residue protein sequence, read N- to C-terminus: C-X-C motif chemokine 11-1 (94 aa).

An N-terminal signal peptide occupies residues 1 to 19 (MKTVTALLLVSLAVVAIEG). Disulfide bonds link Cys27–Cys54 and Cys29–Cys71.

Belongs to the intercrine alpha (chemokine CxC) family.

The protein resides in the secreted. In terms of biological role, ligand for cxcr3.2. Chemotactic for macrophages. This chain is C-X-C motif chemokine 11-1 (cxcl11.1), found in Danio rerio (Zebrafish).